The following is an 87-amino-acid chain: UPF0250 protein BUsg_472 (87 aa).

It belongs to the UPF0250 family.

The protein is UPF0250 protein BUsg_472 of Buchnera aphidicola subsp. Schizaphis graminum (strain Sg).